Reading from the N-terminus, the 1307-residue chain is Light-sensor Protein kinase (1307 aa).

Positions aspartate 215–valine 394 constitute a GAF domain. Position 320 (cysteine 320) interacts with phytochromobilin. The region spanning leucine 609–glutamate 680 is the PAS domain. The PAC domain occupies glutamine 683–arginine 739. Residues aspartate 779–tryptophan 1003 form a hinge region. A Protein kinase domain is found at isoleucine 1004–serine 1307. ATP is bound by residues leucine 1010–valine 1018 and lysine 1031. Aspartate 1127 is a catalytic residue.

The protein in the N-terminal section; belongs to the phytochrome family. In the C-terminal section; belongs to the protein kinase superfamily. Ser/Thr protein kinase family. In terms of assembly, homodimer. Post-translationally, contains one covalently linked phytochromobilin chromophore.

It localises to the cell membrane. The enzyme catalyses L-seryl-[protein] + ATP = O-phospho-L-seryl-[protein] + ADP + H(+). It carries out the reaction L-threonyl-[protein] + ATP = O-phospho-L-threonyl-[protein] + ADP + H(+). In terms of biological role, regulatory photoreceptor which exists in two forms that are reversibly interconvertible by light: the Pr form that absorbs maximally in the red region of the spectrum and the Pfr form that absorbs maximally in the far-red region. Photoconversion of Pr to Pfr induces an array of morphogenic responses, whereas reconversion of Pfr to Pr cancels the induction of those responses. Pfr controls the expression of a number of nuclear genes including those encoding the small subunit of ribulose-bisphosphate carboxylase, chlorophyll A/B binding protein, protochlorophyllide reductase, rRNA, etc. It also controls the expression of its own gene(s) in a negative feedback fashion. This chain is Light-sensor Protein kinase (PHY1), found in Ceratodon purpureus (Fire moss).